The sequence spans 143 residues: Transcriptional regulator MraZ (143 aa).

SpoVT-AbrB domains follow at residues 5–47 (EYEH…PRSV) and 76–119 (AADM…APRR).

Belongs to the MraZ family. As to quaternary structure, forms oligomers.

The protein resides in the cytoplasm. It localises to the nucleoid. In Roseiflexus sp. (strain RS-1), this protein is Transcriptional regulator MraZ.